Consider the following 246-residue polypeptide: Myogenic factor 5 (246 aa).

The disordered stretch occupies residues 1–38 (RVRARIPGLSSPEGEFPEDFEPRELPPFGAPAPTEPAC). The bHLH domain occupies 73–124 (DRRKAATMRERRRLKKVNQAFETLKRCTTANPNQRLPKVEILRNAIRYIESL). The tract at residues 210-246 (EEPGLPLRHAGSLSPGASIDSGARTPGSPPPRTYQAL) is disordered. Pro residues predominate over residues 236–246 (GSPPPRTYQAL).

In terms of assembly, efficient DNA binding requires dimerization with another bHLH protein.

It localises to the nucleus. Its function is as follows. Acts as a transcriptional activator that promotes transcription of muscle-specific target genes and plays a role in muscle differentiation. Induces fibroblasts to differentiate into myoblasts. Probable sequence specific DNA-binding protein. The sequence is that of Myogenic factor 5 (MYF5) from Coturnix japonica (Japanese quail).